The following is a 147-amino-acid chain: D-aminoacyl-tRNA deacylase (147 aa).

The Gly-cisPro motif, important for rejection of L-amino acids motif lies at 136 to 137; that stretch reads GP.

This sequence belongs to the DTD family. In terms of assembly, homodimer.

The protein localises to the cytoplasm. The catalysed reaction is glycyl-tRNA(Ala) + H2O = tRNA(Ala) + glycine + H(+). It catalyses the reaction a D-aminoacyl-tRNA + H2O = a tRNA + a D-alpha-amino acid + H(+). An aminoacyl-tRNA editing enzyme that deacylates mischarged D-aminoacyl-tRNAs. Also deacylates mischarged glycyl-tRNA(Ala), protecting cells against glycine mischarging by AlaRS. Acts via tRNA-based rather than protein-based catalysis; rejects L-amino acids rather than detecting D-amino acids in the active site. By recycling D-aminoacyl-tRNA to D-amino acids and free tRNA molecules, this enzyme counteracts the toxicity associated with the formation of D-aminoacyl-tRNA entities in vivo and helps enforce protein L-homochirality. This Nitratiruptor sp. (strain SB155-2) protein is D-aminoacyl-tRNA deacylase.